Consider the following 365-residue polypeptide: GTPase Obg (365 aa).

Residues 1 to 177 (MFTDYVRILA…GQFLLELKTI (177 aa)) enclose the Obg domain. Positions 64–85 (QFAEDGQPGKGQKRKGRDGKNL) are disordered. An OBG-type G domain is found at 178 to 348 (ADVGFVGLPN…FLNSCRKSFE (171 aa)). Residues 184–191 (GLPNSGKS), 209–213 (FTTLK), 231–234 (DIPG), 300–303 (NKVD), and 329–331 (SAL) contribute to the GTP site. Serine 191 and threonine 211 together coordinate Mg(2+).

Belongs to the TRAFAC class OBG-HflX-like GTPase superfamily. OBG GTPase family. As to quaternary structure, monomer. Mg(2+) serves as cofactor.

It localises to the cytoplasm. In terms of biological role, an essential GTPase which binds GTP, GDP and possibly (p)ppGpp with moderate affinity, with high nucleotide exchange rates and a fairly low GTP hydrolysis rate. Plays a role in control of the cell cycle, stress response, ribosome biogenesis and in those bacteria that undergo differentiation, in morphogenesis control. The chain is GTPase Obg from Methylacidiphilum infernorum (isolate V4) (Methylokorus infernorum (strain V4)).